The sequence spans 512 residues: ATP synthase subunit alpha (512 aa).

Residue 169–176 (GDRQTGKT) coordinates ATP.

The protein belongs to the ATPase alpha/beta chains family. As to quaternary structure, F-type ATPases have 2 components, CF(1) - the catalytic core - and CF(0) - the membrane proton channel. CF(1) has five subunits: alpha(3), beta(3), gamma(1), delta(1), epsilon(1). CF(0) has four main subunits: a(1), b(1), b'(1) and c(9-12).

It localises to the cell inner membrane. The enzyme catalyses ATP + H2O + 4 H(+)(in) = ADP + phosphate + 5 H(+)(out). Produces ATP from ADP in the presence of a proton gradient across the membrane. The alpha chain is a regulatory subunit. The chain is ATP synthase subunit alpha from Cereibacter sphaeroides (strain ATCC 17025 / ATH 2.4.3) (Rhodobacter sphaeroides).